A 197-amino-acid chain; its full sequence is ATP-dependent Clp protease proteolytic subunit (197 aa).

Ser-102 serves as the catalytic Nucleophile. Residue His-127 is part of the active site.

It belongs to the peptidase S14 family. Fourteen ClpP subunits assemble into 2 heptameric rings which stack back to back to give a disk-like structure with a central cavity, resembling the structure of eukaryotic proteasomes.

It localises to the cytoplasm. The catalysed reaction is Hydrolysis of proteins to small peptides in the presence of ATP and magnesium. alpha-casein is the usual test substrate. In the absence of ATP, only oligopeptides shorter than five residues are hydrolyzed (such as succinyl-Leu-Tyr-|-NHMec, and Leu-Tyr-Leu-|-Tyr-Trp, in which cleavage of the -Tyr-|-Leu- and -Tyr-|-Trp bonds also occurs).. Cleaves peptides in various proteins in a process that requires ATP hydrolysis. Has a chymotrypsin-like activity. Plays a major role in the degradation of misfolded proteins. The chain is ATP-dependent Clp protease proteolytic subunit from Borreliella afzelii (strain PKo) (Borrelia afzelii).